A 256-amino-acid chain; its full sequence is MRPGALWPLLWGALVWAVGSVGAVMGSGDSVPGGVCWLQQGKEATCSLVLKTQVSREECCASGNINTAWSNFTHPGNKISLLGFLGLVHCLPCKDSCDGVECGPGKACRMLGGRPHCECVSNCEGVPAGFQVCGSDGATYRDECELRTARCRGHPDLRVMYRGRCQKSCAQVVCPRPQSCLVDQTGSAHCVVCRAAPCPVPPNPGQELCGNNNVTYISSCHLRQATCFLGRSIGVRHPGICTGGPKVPAEEEENFV.

The signal sequence occupies residues 1–23 (MRPGALWPLLWGALVWAVGSVGA). One can recognise a TB domain in the interval 34–105 (GVCWLQQGKE…SCDGVECGPG (72 aa)). Intrachain disulfides connect C36/C59, C46/C90, C60/C93, C97/C108, C102/C117, C119/C151, C123/C144, and C133/C165. N-linked (GlcNAc...) asparagine glycosylation is present at N71. The Follistatin-like 1 domain occupies 97-117 (CDGVECGPGKACRMLGGRPHC). 2 Kazal-like domains span residues 111–167 (LGGR…RCQK) and 187–243 (SAHC…ICTG). The Follistatin-like 2 domain occupies 168-191 (SCAQVVCPRPQSCLVDQTGSAHCV). 3 disulfides stabilise this stretch: C193–C227, C198–C220, and C209–C241. N213 carries an N-linked (GlcNAc...) asparagine glycan.

As to quaternary structure, interacts with INHBA and INHBB. Interacts with FN1. Interacts with ADAM12. Interacts with MLLT10; the interaction enhances MLLT10 in vitro transcriptional activity and self-association. Interacts with MSTN.

The protein resides in the secreted. The protein localises to the nucleus. Functionally, the secreted form is a binding and antagonizing protein for members of the TGF-beta family, such as activin, BMP2 and MSTN. Inhibits activin A-, activin B-, BMP2- and MSDT-induced cellular signaling; more effective on activin A than on activin B. Involved in bone formation; inhibits osteoclast differentiation. Involved in hematopoiesis; involved in differentiation of hemopoietic progenitor cells, increases hematopoietic cell adhesion to fibronectin and seems to contribute to the adhesion of hematopoietic precursor cells to the bone marrow stroma. The nuclear form is probably involved in transcriptional regulation via interaction with MLLT10. The sequence is that of Follistatin-related protein 3 (Fstl3) from Rattus norvegicus (Rat).